Here is a 311-residue protein sequence, read N- to C-terminus: Protoheme IX farnesyltransferase (311 aa).

Transmembrane regions (helical) follow at residues Leu-39 to Glu-59, Leu-61 to Phe-81, Ala-111 to Pro-131, Ala-133 to Lys-153, Ile-162 to Leu-182, Ile-187 to Ile-207, Phe-246 to Trp-266, and Phe-287 to Leu-307.

It belongs to the UbiA prenyltransferase family. Protoheme IX farnesyltransferase subfamily. As to quaternary structure, interacts with CtaA.

It localises to the cell membrane. The enzyme catalyses heme b + (2E,6E)-farnesyl diphosphate + H2O = Fe(II)-heme o + diphosphate. It participates in porphyrin-containing compound metabolism; heme O biosynthesis; heme O from protoheme: step 1/1. Its function is as follows. Converts heme B (protoheme IX) to heme O by substitution of the vinyl group on carbon 2 of heme B porphyrin ring with a hydroxyethyl farnesyl side group. This chain is Protoheme IX farnesyltransferase, found in Shouchella clausii (strain KSM-K16) (Alkalihalobacillus clausii).